A 417-amino-acid chain; its full sequence is mRNA cap guanine-N(7) methyltransferase (417 aa).

An mRNA cap 0 methyltransferase domain is found at 129-412 (SPIIKLRNFN…LYTVFAFKKV (284 aa)). Residue 138 to 139 (NN) participates in mRNA binding. S-adenosyl-L-methionine is bound by residues K142, G160, D182, D211, Q237, and Y242.

This sequence belongs to the class I-like SAM-binding methyltransferase superfamily. mRNA cap 0 methyltransferase family.

Its subcellular location is the nucleus. It catalyses the reaction a 5'-end (5'-triphosphoguanosine)-ribonucleoside in mRNA + S-adenosyl-L-methionine = a 5'-end (N(7)-methyl 5'-triphosphoguanosine)-ribonucleoside in mRNA + S-adenosyl-L-homocysteine. Functionally, responsible for methylating the 5'-cap structure of mRNAs. This is mRNA cap guanine-N(7) methyltransferase (ABD1) from Candida glabrata (strain ATCC 2001 / BCRC 20586 / JCM 3761 / NBRC 0622 / NRRL Y-65 / CBS 138) (Yeast).